A 136-amino-acid polypeptide reads, in one-letter code: Large ribosomal subunit protein bL17 (136 aa).

The protein belongs to the bacterial ribosomal protein bL17 family. As to quaternary structure, part of the 50S ribosomal subunit. Contacts protein L32.

This is Large ribosomal subunit protein bL17 from Rickettsia canadensis (strain McKiel).